The primary structure comprises 232 residues: 7-cyano-7-deazaguanine synthase (232 aa).

8–18 contributes to the ATP binding site; it reads FSGGQDSTTCL. Residues C187, C196, C199, and C202 each coordinate Zn(2+).

Belongs to the QueC family. Requires Zn(2+) as cofactor.

It carries out the reaction 7-carboxy-7-deazaguanine + NH4(+) + ATP = 7-cyano-7-deazaguanine + ADP + phosphate + H2O + H(+). Its pathway is purine metabolism; 7-cyano-7-deazaguanine biosynthesis. Its function is as follows. Catalyzes the ATP-dependent conversion of 7-carboxy-7-deazaguanine (CDG) to 7-cyano-7-deazaguanine (preQ(0)). This Photobacterium profundum (strain SS9) protein is 7-cyano-7-deazaguanine synthase.